Here is a 156-residue protein sequence, read N- to C-terminus: Small ribosomal subunit protein uS7c (156 aa).

This sequence belongs to the universal ribosomal protein uS7 family. As to quaternary structure, part of the 30S ribosomal subunit.

It is found in the plastid. The protein localises to the chloroplast. Its function is as follows. One of the primary rRNA binding proteins, it binds directly to 16S rRNA where it nucleates assembly of the head domain of the 30S subunit. In Thalassiosira pseudonana (Marine diatom), this protein is Small ribosomal subunit protein uS7c (rps7).